A 39-amino-acid chain; its full sequence is Photosystem II reaction center protein J (39 aa).

A helical membrane pass occupies residues 7 to 27 (IPLWIVAVVAGLGVITVVGLF).

It belongs to the PsbJ family. PSII is composed of 1 copy each of membrane proteins PsbA, PsbB, PsbC, PsbD, PsbE, PsbF, PsbH, PsbI, PsbJ, PsbK, PsbL, PsbM, PsbT, PsbX, PsbY, PsbZ, Psb30/Ycf12, peripheral proteins PsbO, CyanoQ (PsbQ), PsbU, PsbV and a large number of cofactors. It forms dimeric complexes.

The protein resides in the cellular thylakoid membrane. One of the components of the core complex of photosystem II (PSII). PSII is a light-driven water:plastoquinone oxidoreductase that uses light energy to abstract electrons from H(2)O, generating O(2) and a proton gradient subsequently used for ATP formation. It consists of a core antenna complex that captures photons, and an electron transfer chain that converts photonic excitation into a charge separation. This Synechococcus sp. (strain JA-2-3B'a(2-13)) (Cyanobacteria bacterium Yellowstone B-Prime) protein is Photosystem II reaction center protein J.